We begin with the raw amino-acid sequence, 378 residues long: Transcription factor YY2 (378 aa).

Residues 39-113 (LETSVGQTIE…DNLLFSPEFG (75 aa)) are mediates transcriptional activation. The tract at residues 243–378 (EFTSMRPKKP…LTHVKNKNDQ (136 aa)) is mediates transcriptional repression. C2H2-type zinc fingers lie at residues 260–284 (IACS…LHIH), 289–311 (HVCA…QLVH), 317–341 (YQCT…VRIH), and 347–371 (FVCP…ILTH).

This sequence belongs to the YY transcription factor family. As to expression, weakly expressed by neuronal and glial cells in the cerebral cortex. Expressed by Purkinje cells and in the granular layers of the cerebellum. Expressed in all layers of spermatocytes in testis but not detected in sperm cells.

Its subcellular location is the nucleus. Functions as a multifunctional transcription factor that may exhibit positive and negative control on a large number of genes. May antagonize YY1 and function in development and differentiation. This Mus musculus (Mouse) protein is Transcription factor YY2 (Yy2).